Here is a 451-residue protein sequence, read N- to C-terminus: Phosphoglucosamine mutase (451 aa).

Serine 103 functions as the Phosphoserine intermediate in the catalytic mechanism. Residues serine 103, aspartate 243, aspartate 245, and aspartate 247 each coordinate Mg(2+). At serine 103 the chain carries Phosphoserine.

It belongs to the phosphohexose mutase family. The cofactor is Mg(2+). Post-translationally, activated by phosphorylation.

It carries out the reaction alpha-D-glucosamine 1-phosphate = D-glucosamine 6-phosphate. In terms of biological role, catalyzes the conversion of glucosamine-6-phosphate to glucosamine-1-phosphate. In Limosilactobacillus reuteri subsp. reuteri (strain JCM 1112) (Lactobacillus reuteri), this protein is Phosphoglucosamine mutase.